The chain runs to 252 residues: Glucosamine-6-phosphate deaminase (252 aa).

The active-site Proton acceptor; for enolization step is D67. N137 acts as the For ring-opening step in catalysis. H139 (proton acceptor; for ring-opening step) is an active-site residue. Catalysis depends on E144, which acts as the For ring-opening step.

Belongs to the glucosamine/galactosamine-6-phosphate isomerase family. NagB subfamily.

It catalyses the reaction alpha-D-glucosamine 6-phosphate + H2O = beta-D-fructose 6-phosphate + NH4(+). It participates in amino-sugar metabolism; N-acetylneuraminate degradation; D-fructose 6-phosphate from N-acetylneuraminate: step 5/5. Functionally, catalyzes the reversible isomerization-deamination of glucosamine 6-phosphate (GlcN6P) to form fructose 6-phosphate (Fru6P) and ammonium ion. The polypeptide is Glucosamine-6-phosphate deaminase (Staphylococcus aureus (strain bovine RF122 / ET3-1)).